The primary structure comprises 269 residues: 3'(2'),5'-bisphosphate nucleotidase CysQ (269 aa).

Residues Glu69, Asp89, Leu91, Asp92, and Asp216 each coordinate Mg(2+). Glu69 contributes to the substrate binding site. Residues 91–94 (LDGT) and Asp216 contribute to the substrate site.

This sequence belongs to the inositol monophosphatase superfamily. CysQ family. Requires Mg(2+) as cofactor.

It localises to the cell inner membrane. It carries out the reaction adenosine 3',5'-bisphosphate + H2O = AMP + phosphate. In terms of biological role, converts adenosine-3',5'-bisphosphate (PAP) to AMP. The chain is 3'(2'),5'-bisphosphate nucleotidase CysQ from Aggregatibacter actinomycetemcomitans (Actinobacillus actinomycetemcomitans).